A 269-amino-acid polypeptide reads, in one-letter code: Hydroxyethylthiazole kinase (269 aa).

Methionine 46 contributes to the substrate binding site. ATP-binding residues include arginine 122 and threonine 168. Position 195 (glycine 195) interacts with substrate.

This sequence belongs to the Thz kinase family. Requires Mg(2+) as cofactor.

It carries out the reaction 5-(2-hydroxyethyl)-4-methylthiazole + ATP = 4-methyl-5-(2-phosphooxyethyl)-thiazole + ADP + H(+). The protein operates within cofactor biosynthesis; thiamine diphosphate biosynthesis; 4-methyl-5-(2-phosphoethyl)-thiazole from 5-(2-hydroxyethyl)-4-methylthiazole: step 1/1. In terms of biological role, catalyzes the phosphorylation of the hydroxyl group of 4-methyl-5-beta-hydroxyethylthiazole (THZ). The protein is Hydroxyethylthiazole kinase of Chloroflexus aurantiacus (strain ATCC 29366 / DSM 635 / J-10-fl).